A 226-amino-acid polypeptide reads, in one-letter code: uncharacterized protein (226 aa).

This is an uncharacterized protein from Haemophilus influenzae (strain ATCC 51907 / DSM 11121 / KW20 / Rd).